We begin with the raw amino-acid sequence, 856 residues long: Glucans biosynthesis glucosyltransferase H (856 aa).

6 consecutive transmembrane segments (helical) span residues 144–164 (ILLV…KGIM), 198–218 (ILIM…TALM), 517–537 (VFLT…FLVL), 574–594 (LFST…ILIW), 608–628 (TLSM…RMIF), and 691–711 (IVGS…VGLG).

The protein belongs to the glycosyltransferase 2 family. OpgH subfamily.

The protein resides in the cell inner membrane. It participates in glycan metabolism; osmoregulated periplasmic glucan (OPG) biosynthesis. Its function is as follows. Involved in the biosynthesis of osmoregulated periplasmic glucans (OPGs). The chain is Glucans biosynthesis glucosyltransferase H from Pseudomonas fluorescens (strain Pf0-1).